The chain runs to 267 residues: 3-deoxy-manno-octulosonate cytidylyltransferase (267 aa).

Belongs to the KdsB family.

It localises to the cytoplasm. It carries out the reaction 3-deoxy-alpha-D-manno-oct-2-ulosonate + CTP = CMP-3-deoxy-beta-D-manno-octulosonate + diphosphate. Its pathway is nucleotide-sugar biosynthesis; CMP-3-deoxy-D-manno-octulosonate biosynthesis; CMP-3-deoxy-D-manno-octulosonate from 3-deoxy-D-manno-octulosonate and CTP: step 1/1. It functions in the pathway bacterial outer membrane biogenesis; lipopolysaccharide biosynthesis. In terms of biological role, activates KDO (a required 8-carbon sugar) for incorporation into bacterial lipopolysaccharide in Gram-negative bacteria. The chain is 3-deoxy-manno-octulosonate cytidylyltransferase from Paraburkholderia phymatum (strain DSM 17167 / CIP 108236 / LMG 21445 / STM815) (Burkholderia phymatum).